The sequence spans 396 residues: MTTYTVSRKVAWLRVVTLAVAAFIFNTTEFVPVGLLSDIAQSFHMQTAQVGIMLTIYAWVVALMSLPFMLMTSQVERRKLLICLFVVFIASHVLSFLSWSFTVLVISRIGVAFAHAIFWSITASLAIRMAPAGKRAQALSLIATGTALAMVLGLPLGRIVGQYFGWRMTFFAIGIGALVTLLCLIKLLPLLPSEHSGSLKSLPLLFRRPALMSIYLLTVVVVTAHYTAYSYIEPFVQNIAGFSANFATALLLLLGGAGIIGSVIFGKLGNQYASALVSTAIALLLVCLALLLPAANSEIHLGVLSIFWGIAMMIIGLGMQVKVLALAPDATDVAMALFSGIFNIGIGAGALVGNQVSLHWSMSMIGYVGAVPAFAALIWSIIIFRRWPVTLEEQTQ.

12 helical membrane-spanning segments follow: residues 15-35, 50-70, 81-101, 103-123, 136-156, 170-190, 209-229, 246-266, 275-295, 299-319, 333-353, and 364-384; these read VVTL…PVGL, VGIM…PFML, LICL…SWSF, VLVI…SITA, AQAL…GLPL, FFAI…LLPL, PALM…YTAY, FATA…VIFG, ALVS…LPAA, IHLG…GLGM, VAMA…ALVG, and MIGY…IIIF.

Belongs to the major facilitator superfamily. SotB (TC 2.A.1.2) family.

The protein resides in the cell inner membrane. Its function is as follows. Involved in the efflux of sugars. The physiological role may be the reduction of the intracellular concentration of toxic sugars or sugar metabolites. The chain is Probable sugar efflux transporter from Shigella flexneri serotype 5b (strain 8401).